Reading from the N-terminus, the 279-residue chain is 2'-N-acetylparomamine deacetylase (279 aa).

The Zn(2+) site is built by H31, D34, and H157. Positions 245–279 (PRRWTGGTAGAGHAAGRRGAPHTERVWTPAPAGAR) are disordered. Residues 246 to 258 (RRWTGGTAGAGHA) show a composition bias toward low complexity.

This sequence belongs to the PIGL family. Requires Zn(2+) as cofactor.

It carries out the reaction 2'-N-acetylparomamine + H2O = paromamine + acetate. The enzyme catalyses 2'''-acetyl-6'''-hydroxyneomycin C + H2O = 6'''-deamino-6'''-hydroxyneomycin C + acetate. It functions in the pathway antibiotic biosynthesis; neomycin biosynthesis. Its function is as follows. Deacetylase involved in the biosynthesis of neomycin by mediating 2 steps of the pathway. Deacetylates both 2'-N-acetylparomamine and 2'''-acetyl-6'''-hydroxyneomycin C. In Streptomyces fradiae (Streptomyces roseoflavus), this protein is 2'-N-acetylparomamine deacetylase (neoL).